We begin with the raw amino-acid sequence, 201 residues long: 3-isopropylmalate dehydratase small subunit (201 aa).

This sequence belongs to the LeuD family. LeuD type 1 subfamily. As to quaternary structure, heterodimer of LeuC and LeuD.

It catalyses the reaction (2R,3S)-3-isopropylmalate = (2S)-2-isopropylmalate. Its pathway is amino-acid biosynthesis; L-leucine biosynthesis; L-leucine from 3-methyl-2-oxobutanoate: step 2/4. In terms of biological role, catalyzes the isomerization between 2-isopropylmalate and 3-isopropylmalate, via the formation of 2-isopropylmaleate. The chain is 3-isopropylmalate dehydratase small subunit from Shewanella sp. (strain ANA-3).